The chain runs to 373 residues: Putative F-box protein At1g76830 (373 aa).

In terms of domain architecture, F-box spans 4–49 (ITSFENLPEELKREILLRMSPNSLVTCSRVSKKLASMIRTKSFKEL).

The polypeptide is Putative F-box protein At1g76830 (Arabidopsis thaliana (Mouse-ear cress)).